The chain runs to 191 residues: Small ribosomal subunit protein eS7z (191 aa).

Met1 bears the N-acetylmethionine mark. Residues 15–50 (ELSELDEQVAQAFFDLENTNQELKSELKDLYVNSAV) are a coiled coil.

The protein belongs to the eukaryotic ribosomal protein eS7 family.

This is Small ribosomal subunit protein eS7z (RPS7A) from Arabidopsis thaliana (Mouse-ear cress).